Consider the following 346-residue polypeptide: LRP2-binding protein (346 aa).

Residues 58–91 form a TPR repeat; the sequence is AMAYFLRGQLYFEEGWYEEALAQFEEIQEKDHQA. Sel1-like repeat units follow at residues 92–124, 132–167, 172–205, 206–241, 242–276, and 296–331; these read IYQL…DSSC, FAAA…DNGN, VKAQ…GNGS, LESQ…ERGN, VYAQ…EVHD, and AMAA…RLNP.

Interacts with LRP2.

Its subcellular location is the cytoplasm. May act as an adapter that regulates LRP2 function. The chain is LRP2-binding protein (Lrp2bp) from Mus musculus (Mouse).